A 341-amino-acid chain; its full sequence is GTPase Obg (341 aa).

Residues 1-159 enclose the Obg domain; it reads MKFLDQAKVY…RTLWLRLKLI (159 aa). The 168-residue stretch at 160–327 folds into the OBG-type G domain; it reads ADAGLIGLPN…MLRAGAHMIE (168 aa). GTP is bound by residues 166–173, 191–195, 212–215, 279–282, and 308–310; these read GLPNAGKS, FTTLY, DIPG, SQID, and SAV. Residues Ser173 and Thr193 each contribute to the Mg(2+) site.

The protein belongs to the TRAFAC class OBG-HflX-like GTPase superfamily. OBG GTPase family. In terms of assembly, monomer. It depends on Mg(2+) as a cofactor.

The protein localises to the cytoplasm. Functionally, an essential GTPase which binds GTP, GDP and possibly (p)ppGpp with moderate affinity, with high nucleotide exchange rates and a fairly low GTP hydrolysis rate. Plays a role in control of the cell cycle, stress response, ribosome biogenesis and in those bacteria that undergo differentiation, in morphogenesis control. This Bartonella quintana (strain Toulouse) (Rochalimaea quintana) protein is GTPase Obg.